Reading from the N-terminus, the 117-residue chain is Large ribosomal subunit protein bL20 (117 aa).

It belongs to the bacterial ribosomal protein bL20 family.

Binds directly to 23S ribosomal RNA and is necessary for the in vitro assembly process of the 50S ribosomal subunit. It is not involved in the protein synthesizing functions of that subunit. The polypeptide is Large ribosomal subunit protein bL20 (Rickettsia africae (strain ESF-5)).